A 343-amino-acid chain; its full sequence is RNA-binding protein 43 (343 aa).

The RRM domain maps to 15–90 (RTVVVSGLPV…PLLTVSHFSE (76 aa)). The tract at residues 170 to 200 (RRNWTGQNPRRVLQKNENSAPTLGTSVPEPA) is disordered. Positions 184-194 (KNENSAPTLGT) are enriched in polar residues.

This is RNA-binding protein 43 (Rbm43) from Rattus norvegicus (Rat).